The sequence spans 256 residues: Deoxyribose-phosphate aldolase (256 aa).

D102 (proton donor/acceptor) is an active-site residue. The active-site Schiff-base intermediate with acetaldehyde is K165. The active-site Proton donor/acceptor is K197.

The protein belongs to the DeoC/FbaB aldolase family. DeoC type 2 subfamily.

It is found in the cytoplasm. The catalysed reaction is 2-deoxy-D-ribose 5-phosphate = D-glyceraldehyde 3-phosphate + acetaldehyde. It participates in carbohydrate degradation; 2-deoxy-D-ribose 1-phosphate degradation; D-glyceraldehyde 3-phosphate and acetaldehyde from 2-deoxy-alpha-D-ribose 1-phosphate: step 2/2. Its function is as follows. Catalyzes a reversible aldol reaction between acetaldehyde and D-glyceraldehyde 3-phosphate to generate 2-deoxy-D-ribose 5-phosphate. This is Deoxyribose-phosphate aldolase from Shewanella sp. (strain MR-7).